The chain runs to 70 residues: Small ribosomal subunit protein bS21 (70 aa).

Belongs to the bacterial ribosomal protein bS21 family.

The sequence is that of Small ribosomal subunit protein bS21 from Sulfurimonas denitrificans (strain ATCC 33889 / DSM 1251) (Thiomicrospira denitrificans (strain ATCC 33889 / DSM 1251)).